The primary structure comprises 247 residues: Transmembrane protein 33 (247 aa).

At Ala-2 the chain carries N-acetylalanine. The Lumenal portion of the chain corresponds to 2–31 (ADTTPNGPQGAGAVQFMMTNKLDTAMWLSR). The helical transmembrane segment at 32 to 52 (LFTVYCSALFVLPLLGLHEAA) threads the bilayer. Residues 53–100 (SFYQRALLANALTSALRLHQRLPHFQLSRAFLAQALLEDSCHYLLYSL) are Cytoplasmic-facing. The chain crosses the membrane as a helical span at residues 101–121 (IFVNSYPVTMSIFPVLLFSLL). At 122-155 (HAATYTKKVLDAKGSNSLPLLRSVLDKLSTNQQN) the chain is on the lumenal side. A helical membrane pass occupies residues 156-176 (ILKFIACNEIFLMPATVFMLF). Residues 177-247 (SGQGSLLQPF…FISRLAPTVA (71 aa)) lie on the Cytoplasmic side of the membrane.

Belongs to the PER33/POM33 family. Interacts with EIF2AK3. Interacts with ARL6IP1, isoform RTN1-A of RTN1, isoform RTN2-B of RTN2, isoform 3 of RTN3 and isoform 3 of RTN4. Interacts with RNF5. Interacts with RNF26. Interacts with PKD2. As to expression, highly expressed in the liver and significantly in brain, lungs and kidneys.

It is found in the endoplasmic reticulum membrane. Its subcellular location is the melanosome. The protein localises to the nucleus envelope. Acts as a regulator of the tubular endoplasmic reticulum (ER) network by modulating intracellular calcium homeostasis. Mechanistically, stimulates PKD2 calcium-dependent activity. Suppresses the RTN3/4-induced formation of the ER tubules. Positively regulates PERK-mediated and IRE1-mediated unfolded protein response signaling. Plays an essential role in VEGF-mediated release of Ca(2+) from ER stores during angiogenesis. Also plays a role in the modulation of innate immune signaling through the cGAS-STING pathway by interacting with RNF26. Participates in lipid metabolism by acting as a downstream effector of the pyruvate kinase/PKM. Forms a complex with RNF5 to facilitate polyubiquitination and subsequent degradation of SCAP on the ER membrane. This Rattus norvegicus (Rat) protein is Transmembrane protein 33 (Tmem33).